The chain runs to 398 residues: MTPSRKPARPGAKKVVSQEPSAKASRPKPSSQSKSKAQPKAKPESKPQAKSQAKPQAKSKPVEGKSQGASKGLHPRNLHGQGYDFDALMDTTPELKPFVRPNPYGNLSIDFADPRAVKLLNLALLRLHYGLSYWDIPEGFLCPPIPGRVDYLHYLADLLAESTPASKGGKRKLPNVTRAPKGERVVALDIGTGANGIYPLLGHQVYGWRFVASDIDPVSLKNVERIIANNPQLAGKLSLRLQSDSKQIFTGIIRAEDRFDLTLCNPPFHASLAEASRGSERKLKNLAANKRAKGHEVAKSKEKLNFGGQKAELWCEGGEQAFLGQMIRESQKFGSQCLWFTSLVSKKENLKPCYRLLEQVGAKRVETLEMAQGNKLTRVLAWTFLTPEQHSLWGLYRV.

A compositionally biased stretch (basic residues) spans 1–12 (MTPSRKPARPGA). The segment at 1 to 85 (MTPSRKPARP…RNLHGQGYDF (85 aa)) is disordered. Composition is skewed to low complexity over residues 20–40 (PSAK…AQPK) and 48–59 (QAKSQAKPQAKS).

This sequence belongs to the methyltransferase superfamily. METTL16/RlmF family.

It is found in the cytoplasm. It carries out the reaction adenosine(1618) in 23S rRNA + S-adenosyl-L-methionine = N(6)-methyladenosine(1618) in 23S rRNA + S-adenosyl-L-homocysteine + H(+). Specifically methylates the adenine in position 1618 of 23S rRNA. This is Ribosomal RNA large subunit methyltransferase F from Shewanella loihica (strain ATCC BAA-1088 / PV-4).